Here is a 131-residue protein sequence, read N- to C-terminus: Peptide methionine sulfoxide reductase MsrB (131 aa).

Residues 8–130 form the MsrB domain; sequence LEEWKQMLDP…NSVCLDLVPR (123 aa). The Zn(2+) site is built by cysteine 47, cysteine 50, cysteine 96, and cysteine 99. Cysteine 119 acts as the Nucleophile in catalysis.

Belongs to the MsrB Met sulfoxide reductase family. Requires Zn(2+) as cofactor.

It catalyses the reaction L-methionyl-[protein] + [thioredoxin]-disulfide + H2O = L-methionyl-(R)-S-oxide-[protein] + [thioredoxin]-dithiol. In Pseudomonas syringae pv. syringae (strain B728a), this protein is Peptide methionine sulfoxide reductase MsrB.